The following is a 291-amino-acid chain: ATP synthase subunit a (291 aa).

Helical transmembrane passes span 50-70, 108-128, 161-181, 203-223, 241-261, and 262-282; these read LDSM…FWIV, IAPL…MDLI, DPNI…FYSI, PVAK…TFLA, LIFI…SVPW, and AIFH…LTIV.

The protein belongs to the ATPase A chain family. F-type ATPases have 2 components, CF(1) - the catalytic core - and CF(0) - the membrane proton channel. CF(1) has five subunits: alpha(3), beta(3), gamma(1), delta(1), epsilon(1). CF(0) has three main subunits: a(1), b(2) and c(9-12). The alpha and beta chains form an alternating ring which encloses part of the gamma chain. CF(1) is attached to CF(0) by a central stalk formed by the gamma and epsilon chains, while a peripheral stalk is formed by the delta and b chains.

It is found in the cell inner membrane. In terms of biological role, key component of the proton channel; it plays a direct role in the translocation of protons across the membrane. This is ATP synthase subunit a from Acinetobacter baumannii (strain SDF).